A 290-amino-acid polypeptide reads, in one-letter code: 4-hydroxybenzoate octaprenyltransferase (290 aa).

8 helical membrane-spanning segments follow: residues 23–43 (IGAL…TPGV), 46–66 (LWIL…GCVV), 99–119 (LFVV…TMTI), 141–161 (LPQV…FAAV), 163–183 (ESVP…AVAY), 213–233 (LIIG…GELN), 234–254 (GLGW…VYQQ), and 268–288 (AFMN…MSYW).

This sequence belongs to the UbiA prenyltransferase family. Mg(2+) serves as cofactor.

It is found in the cell inner membrane. It carries out the reaction all-trans-octaprenyl diphosphate + 4-hydroxybenzoate = 4-hydroxy-3-(all-trans-octaprenyl)benzoate + diphosphate. Its pathway is cofactor biosynthesis; ubiquinone biosynthesis. Its function is as follows. Catalyzes the prenylation of para-hydroxybenzoate (PHB) with an all-trans polyprenyl group. Mediates the second step in the final reaction sequence of ubiquinone-8 (UQ-8) biosynthesis, which is the condensation of the polyisoprenoid side chain with PHB, generating the first membrane-bound Q intermediate 3-octaprenyl-4-hydroxybenzoate. The chain is 4-hydroxybenzoate octaprenyltransferase from Escherichia coli (strain UTI89 / UPEC).